Here is a 133-residue protein sequence, read N- to C-terminus: Egg protein CP422 (133 aa).

Positions 1 to 21 are cleaved as a signal peptide; sequence MHECMIVFFIFAVVSIYYADA. 3 disulfide bridges follow: Cys-107/Cys-121, Cys-114/Cys-125, and Cys-120/Cys-130.

Its subcellular location is the secreted. This Schistosoma japonicum (Blood fluke) protein is Egg protein CP422 (CP422).